Consider the following 165-residue polypeptide: Large ribosomal subunit protein uL10 (165 aa).

The protein belongs to the universal ribosomal protein uL10 family. As to quaternary structure, part of the ribosomal stalk of the 50S ribosomal subunit. The N-terminus interacts with L11 and the large rRNA to form the base of the stalk. The C-terminus forms an elongated spine to which L12 dimers bind in a sequential fashion forming a multimeric L10(L12)X complex.

Functionally, forms part of the ribosomal stalk, playing a central role in the interaction of the ribosome with GTP-bound translation factors. The protein is Large ribosomal subunit protein uL10 of Salmonella agona (strain SL483).